A 376-amino-acid chain; its full sequence is Succinyl-diaminopimelate desuccinylase (376 aa).

His-64 lines the Zn(2+) pocket. Asp-66 is an active-site residue. Asp-97 provides a ligand contact to Zn(2+). Glu-131 serves as the catalytic Proton acceptor. Zn(2+)-binding residues include Glu-132, Glu-160, and His-347.

It belongs to the peptidase M20A family. DapE subfamily. As to quaternary structure, homodimer. The cofactor is Zn(2+). It depends on Co(2+) as a cofactor.

It catalyses the reaction N-succinyl-(2S,6S)-2,6-diaminopimelate + H2O = (2S,6S)-2,6-diaminopimelate + succinate. It functions in the pathway amino-acid biosynthesis; L-lysine biosynthesis via DAP pathway; LL-2,6-diaminopimelate from (S)-tetrahydrodipicolinate (succinylase route): step 3/3. Its function is as follows. Catalyzes the hydrolysis of N-succinyl-L,L-diaminopimelic acid (SDAP), forming succinate and LL-2,6-diaminopimelate (DAP), an intermediate involved in the bacterial biosynthesis of lysine and meso-diaminopimelic acid, an essential component of bacterial cell walls. The sequence is that of Succinyl-diaminopimelate desuccinylase from Wigglesworthia glossinidia brevipalpis.